Consider the following 37-residue polypeptide: Photosystem I reaction center subunit VIII (37 aa).

The helical transmembrane segment at 9 to 29 (SIFVPLVGLVFPAIAMASLFL) threads the bilayer.

This sequence belongs to the PsaI family.

It is found in the plastid. It localises to the chloroplast thylakoid membrane. May help in the organization of the PsaL subunit. This chain is Photosystem I reaction center subunit VIII, found in Cucumis sativus (Cucumber).